The following is a 612-amino-acid chain: MKPKKRQMEYLTRGLIAVQTEQGVFVSWRFLGTDHETTAFHLYRDGKRITRDPIAESTNFLDQNGTADSVYQVAAVNKGREEKLSKKARVWQENVLEVPLAKPEGGVTPDGKPYTYSANDASVGDIDGDGEYEMILKWDPSNSKDNAHDGYTGEVLIDAYKLDGTFLWRINLGRNIRAGAHYTQFMVYDLDGDGKAEIAMKTADGTTDGKGHIIGDEQADFRNEQGRILSGPEYLTVFKGETGEALTTVEYEPPRGKLEDWGDGYGNRMDRFLAGTAYLDGERPSLVMARGYYTRTVLVAYDFRNGRLKKRWVFDSNQPGHEAYAGQGNHSLSVADVDGDGKDEIIYGAMAVDHDGTGLYSTGLGHGDAMHVGDLDPSRKGLEVFQVHEDATKPYGLSLRDAGTGEILWGVHAGTDVGRGMAAHIDPSYKGSLVWGIDPPGNDGMSYGLFTSKGEKISDKAPSSANFAIWWDGDLVRELLDHDWDGTIGRPKIEKWDAENGCLKTIFQPAGVLSNNGTKGNPVLQANLFGDWREEVIWRTEDSSALRIYTTTHLTRHCFYTLMHDPVYRLGIAWQNTAYNQPPHTSFYLGTGMKKPPKPALYIAGSKAEAPL.

Asn-119 provides a ligand contact to substrate. Asp-120, Asp-125, Asp-127, Asp-129, Glu-131, and Glu-133 together coordinate Ca(2+). Substrate contacts are provided by Asp-139, Glu-154, and Arg-174. The Ca(2+) site is built by Asp-189, Asp-191, Asp-193, Lys-195, and Glu-197. Substrate is bound by residues Gly-205 and Arg-222. Residues His-330, Asp-336, Asp-338, Asp-340, Lys-342, Glu-344, Asp-353, His-354, His-366, Asp-368, Asp-374, Asp-376, Arg-379, Gly-381, Glu-383, and Glu-389 each contribute to the Ca(2+) site. A substrate-binding site is contributed by Arg-419. Ca(2+) contacts are provided by Asp-472, Asp-474, Val-476, and Glu-478. Residue 516–518 participates in substrate binding; it reads NGT. Residues Asn-527, Phe-529, Asp-531, Arg-533, Glu-535, Asn-576, and Ala-578 each coordinate Ca(2+). A substrate-binding site is contributed by Tyr-579. Asn-580 is a binding site for Ca(2+).

It belongs to the polysaccharide lyase 11 family. Monomer. Mn(2+) is required as a cofactor. Requires Zn(2+) as cofactor. It depends on Co(2+) as a cofactor. Ca(2+) serves as cofactor.

The protein resides in the secreted. The catalysed reaction is Exotype eliminative cleavage of alpha-L-rhamnopyranosyl-(1-&gt;4)-alpha-D-galactopyranosyluronic acid bonds of rhamnogalacturonan I oligosaccharides containing alpha-L-rhamnopyranose at the reducing end and 4-deoxy-4,5-unsaturated D-galactopyranosyluronic acid at the non-reducing end. The products are the disaccharide 2-O-(4-deoxy-beta-L-threo-hex-4-enopyranuronosyl)-alpha-L-rhamnopyranose and the shortened rhamnogalacturonan oligosaccharide containing one 4-deoxy-4,5-unsaturated D-galactopyranosyluronic acid at the non-reducing end.. Its function is as follows. Pectinolytic enzyme that degrades type I rhamnogalacturonan from plant cell walls and releases disaccharide products. Degrades rhamnogalacturonan, polygalacturonic acid and pectic acid. Has very low activity on pectin. In Bacillus subtilis (strain 168), this protein is Rhamnogalacturonan exolyase YesX (yesX).